Consider the following 184-residue polypeptide: MEQSIRSIDGSRSLSNVGASLIDRESINQRALQLLQRNRRRRLLLNRSEDKARYIQPERSASSQQIHPPEHHISAHERITKARGTRYKPTDLALAEIRKYQRSTDLLISRMPFARLVKEVTDQFTTESEPLRWQSMAIMALQEASEAYLVGLLEHTNLLALHAKRITIMRKDMQLARRIRGQFI.

Positions 54 to 81 (YIQPERSASSQQIHPPEHHISAHERITK) are disordered. Positions 68–80 (PPEHHISAHERIT) are enriched in basic and acidic residues. Positions 82–182 (ARGTRYKPTD…MQLARRIRGQ (101 aa)) are H3-like.

It belongs to the histone H3 family. Component of centromeric nucleosomes, where DNA is wrapped around a histone octamer core. The octamer contains two molecules each of H2A, H2B, CSE4/CENPA and H4 assembled in one CSE4-H4 heterotetramer and two H2A-H2B heterodimers. Interacts with the inner kinetochore. Ubiquitinated. Is degraded through ubiquitin-mediated proteolysis when not protected by its association to the kinetochore.

Its subcellular location is the nucleus. The protein localises to the chromosome. It is found in the centromere. Histone H3-like nucleosomal protein that is specifically found in centromeric nucleosomes. Replaces conventional H3 in the nucleosome core of centromeric chromatin that serves as an assembly site for the inner kinetochore. Required for recruitment and assembly of kinetochore proteins, mitotic progression and chromosome segregation. May serve as an epigenetic mark that propagates centromere identity through replication and cell division. The sequence is that of Histone H3-like centromeric protein CSE4 (CSE4) from Kluyveromyces lactis (strain ATCC 8585 / CBS 2359 / DSM 70799 / NBRC 1267 / NRRL Y-1140 / WM37) (Yeast).